The primary structure comprises 225 residues: MSLHYYLFIFWILAFVQFSHATYQYEVRMCVVGKSTPQNTYGYGSKRVGRYGIYGDCGCFQKPVGCPRLWYPQYNKACAPMDHWINIPQKQTQLEEVTNWRTATVEEVQRTPLETWNVERTPVETWNLQKNQQGPHSVVKSKVYKKSVYNAKRKVKSLYTKTKKTYAKPVKKYKTIEVITYRKVKVEHIQCCPPLKFWFFDFPDFVEVSDANGNGAKSTNEQFSK.

A signal peptide spans Met1–Ala21.

In terms of tissue distribution, prismatic layer of shell (at protein level).

It is found in the secreted. This is an uncharacterized protein from Margaritifera margaritifera (Freshwater pearl mussel).